Consider the following 349-residue polypeptide: MQQDGLSSVNQLGGLFVNGRPLPLDTRQQIVQLAIRGMRPCDISRSLKVSNGCVSKILGRYYRTGVLEPKCIGGSKPRLATPAVVARIAQLKDEYPALFAWEIQHQLCTEGLCTQDKAPSVSSINRVLRALQEDQSLHWTQLRSPAVLAPVLPSPHSNCGAPRGPHPGTSHRNRTIFSPGQAEALEKEFQRGQYPDSVARGKLAAATSLPEDTVRVWFSNRRAKWRRQEKLKWEAQLPGASQDLTVPKNSPGIISAQQSPGSVPSAALPVLEPLSPSFCQLCCGTAPGRCSSDTSSQAYLQPYWDCQSLLPVASSSYVEFAWPCLTTHPVHHLIGGPGQVPSTHCSNWP.

Residues Gly5–Leu131 constitute a DNA-binding region (paired). The interval Ser8–Thr64 is PAI subdomain. Residues Ala83–Leu131 form an RED subdomain region. The segment at residues Ser170–Glu229 is a DNA-binding region (homeobox). The tract at residues Phe278–Pro349 is transcription repression.

The protein belongs to the paired homeobox family. In terms of tissue distribution, expressed in early pancreas. Later restricted to beta cells. Undetectable in adult islets.

The protein localises to the nucleus. Its function is as follows. Plays an important role in the differentiation and development of pancreatic islet beta cells. Transcriptional repressor that competes with PAX6 in binding to a common element in the glucagon, insulin and somatostatin promoters. This chain is Paired box protein Pax-4 (Pax4), found in Mus musculus (Mouse).